Consider the following 349-residue polypeptide: Protein RecA (349 aa).

ATP is bound at residue 65–72 (GPESSGKT).

This sequence belongs to the RecA family.

The protein localises to the cytoplasm. Can catalyze the hydrolysis of ATP in the presence of single-stranded DNA, the ATP-dependent uptake of single-stranded DNA by duplex DNA, and the ATP-dependent hybridization of homologous single-stranded DNAs. It interacts with LexA causing its activation and leading to its autocatalytic cleavage. This chain is Protein RecA, found in Aliarcobacter butzleri (strain RM4018) (Arcobacter butzleri).